The sequence spans 233 residues: Large ribosomal subunit protein uL1 (233 aa).

This sequence belongs to the universal ribosomal protein uL1 family. As to quaternary structure, part of the 50S ribosomal subunit.

Functionally, binds directly to 23S rRNA. The L1 stalk is quite mobile in the ribosome, and is involved in E site tRNA release. In terms of biological role, protein L1 is also a translational repressor protein, it controls the translation of the L11 operon by binding to its mRNA. The chain is Large ribosomal subunit protein uL1 from Campylobacter jejuni subsp. doylei (strain ATCC BAA-1458 / RM4099 / 269.97).